Reading from the N-terminus, the 464-residue chain is MGKRLLDKLWERHVVATNENGLDLLYIDLHLVHEVTSPQAFEGLRLTNRRVRRPDLTFATMDHNIPTKDVWNITDRIAKQQLDTLRENCKQFQVPLADIGDEEQGIVHVIGPELGLTQPGKTIVCGDSHTATHGAFGALAFGIGTSEVEHVLATQTLWQRKPKAMGIELKGKLPQGVYAKDIILHLLSKYGVAVGTGYVMEFYGETIHAMDMEERMTLCNMAIEGGAKAGIIAPDEKTVAYVKGRKYAPKDYESIKKKWSELYTDLDAVYDLHISVDVTDLAPYVTWGTNPSMGVRIDEKLPEKYDANDERAFSYMGLSPGQSTYDIPVQHVFIGSCTNSRLSDLEIAASVVKGKKVKEGVRALVVPGSQRVREAAMHKGLHRIFEEAGFEWREPGCSMCLGMNPDQVPEGEHCASTSNRNFEGRQGKGARTHLVSPAMAAAAALYGHFVDIRKESYDGAISYS.

The [4Fe-4S] cluster site is built by C337, C397, and C400.

This sequence belongs to the aconitase/IPM isomerase family. LeuC type 1 subfamily. Heterodimer of LeuC and LeuD. [4Fe-4S] cluster is required as a cofactor.

It catalyses the reaction (2R,3S)-3-isopropylmalate = (2S)-2-isopropylmalate. It functions in the pathway amino-acid biosynthesis; L-leucine biosynthesis; L-leucine from 3-methyl-2-oxobutanoate: step 2/4. Its function is as follows. Catalyzes the isomerization between 2-isopropylmalate and 3-isopropylmalate, via the formation of 2-isopropylmaleate. The polypeptide is 3-isopropylmalate dehydratase large subunit (Bacillus cereus (strain G9842)).